We begin with the raw amino-acid sequence, 118 residues long: Large ribosomal subunit protein uL22 (118 aa).

This sequence belongs to the universal ribosomal protein uL22 family. In terms of assembly, part of the 50S ribosomal subunit.

This protein binds specifically to 23S rRNA; its binding is stimulated by other ribosomal proteins, e.g. L4, L17, and L20. It is important during the early stages of 50S assembly. It makes multiple contacts with different domains of the 23S rRNA in the assembled 50S subunit and ribosome. Functionally, the globular domain of the protein is located near the polypeptide exit tunnel on the outside of the subunit, while an extended beta-hairpin is found that lines the wall of the exit tunnel in the center of the 70S ribosome. This chain is Large ribosomal subunit protein uL22, found in Treponema denticola (strain ATCC 35405 / DSM 14222 / CIP 103919 / JCM 8153 / KCTC 15104).